Here is a 255-residue protein sequence, read N- to C-terminus: Imidazole glycerol phosphate synthase subunit HisF (255 aa).

Catalysis depends on residues Asp11 and Asp130.

This sequence belongs to the HisA/HisF family. As to quaternary structure, heterodimer of HisH and HisF.

It is found in the cytoplasm. The enzyme catalyses 5-[(5-phospho-1-deoxy-D-ribulos-1-ylimino)methylamino]-1-(5-phospho-beta-D-ribosyl)imidazole-4-carboxamide + L-glutamine = D-erythro-1-(imidazol-4-yl)glycerol 3-phosphate + 5-amino-1-(5-phospho-beta-D-ribosyl)imidazole-4-carboxamide + L-glutamate + H(+). The protein operates within amino-acid biosynthesis; L-histidine biosynthesis; L-histidine from 5-phospho-alpha-D-ribose 1-diphosphate: step 5/9. Its function is as follows. IGPS catalyzes the conversion of PRFAR and glutamine to IGP, AICAR and glutamate. The HisF subunit catalyzes the cyclization activity that produces IGP and AICAR from PRFAR using the ammonia provided by the HisH subunit. The sequence is that of Imidazole glycerol phosphate synthase subunit HisF from Exiguobacterium sp. (strain ATCC BAA-1283 / AT1b).